A 1876-amino-acid chain; its full sequence is Phenolphthiocerol/phthiocerol polyketide synthase subunit A (1876 aa).

In terms of domain architecture, Carrier 1 spans 9 to 83 (ADLRHWLIDY…ALAAYLAAPE (75 aa)). Residue Ser-43 is modified to O-(pantetheine 4'-phosphoryl)serine. A Ketosynthase family 3 (KS3) domain is found at 101 to 526 (DEPIAVVGMG…GTNAHVVIEQ (426 aa)). Active-site for beta-ketoacyl synthase activity residues include Cys-273, His-408, and His-448. Residues 624–950 (EGSPGPGTVF…NLNKAHTIHP (327 aa)) form an acyltransferase region. Ser-720 serves as the catalytic For malonyltransferase activity. The segment at 997-1112 (HTTVATVSAS…AQLSSSPSDS (116 aa)) is N-terminal hotdog fold. The PKS/mFAS DH domain occupies 997–1267 (HTTVATVSAS…YRALDFGLDV (271 aa)). His-1027 acts as the Proton acceptor; for dehydratase activity in catalysis. The tract at residues 1104–1130 (QLSSSPSDSASSLNEHHRANGQPPERA) is disordered. Residues 1106-1115 (SSSPSDSASS) show a composition bias toward low complexity. The C-terminal hotdog fold stretch occupies residues 1130-1267 (AHRDLIPDLA…YRALDFGLDV (138 aa)). Residue Asp-1186 is the Proton donor; for dehydratase activity of the active site. The tract at residues 1491 to 1728 (AAYLITGGLG…DGYDVAQAVV (238 aa)) is beta-ketoacyl reductase. 1492 to 1551 (AYLITGGLGALGLLMADWLADRGAHRLVLTGRTPLPPRRDWQLDTLDTELRRRIDAIRAL) lines the NADP(+) pocket. The Carrier 2 domain occupies 1759 to 1836 (EVRSELEQGL…SLASYLAKRV (78 aa)). Ser-1796 carries the O-(pantetheine 4'-phosphoryl)serine modification.

Requires NADP(+) as cofactor. It depends on pantetheine 4'-phosphate as a cofactor.

It carries out the reaction icosanoyl-[(phenol)carboxyphthiodiolenone synthase] + 2 (S)-methylmalonyl-CoA + 3 malonyl-CoA + 5 NADPH + 10 H(+) = C32-carboxyphthiodiolenone-[(phenol)carboxyphthiodiolenone synthase] + 5 CO2 + 5 NADP(+) + 5 CoA + 2 H2O. The enzyme catalyses docosanoyl-[(phenol)carboxyphthiodiolenone synthase] + 2 (S)-methylmalonyl-CoA + 3 malonyl-CoA + 5 NADPH + 10 H(+) = C34-carboxyphthiodiolenone-[(phenol)carboxyphthiodiolenone synthase] + 5 CO2 + 5 NADP(+) + 5 CoA + 2 H2O. The catalysed reaction is 17-(4-hydroxyphenyl)heptadecanoyl-[(phenol)carboxyphthiodiolenone synthase] + 2 (S)-methylmalonyl-CoA + 3 malonyl-CoA + 5 NADPH + 10 H(+) = C35-(phenol)carboxyphthiodiolenone-[(phenol)carboxyphthiodiolenone synthase] + 5 CO2 + 5 NADP(+) + 5 CoA + 2 H2O. It catalyses the reaction 19-(4-hydroxyphenyl)nonadecanoyl-[(phenol)carboxyphthiodiolenone synthase] + 2 (S)-methylmalonyl-CoA + 3 malonyl-CoA + 5 NADPH + 10 H(+) = C37-(phenol)carboxyphthiodiolenone-[(phenol)carboxyphthiodiolenone synthase] + 5 CO2 + 5 NADP(+) + 5 CoA + 2 H2O. It participates in lipid metabolism; fatty acid biosynthesis. In terms of biological role, part of the PpsABCDE complex involved in the biosynthesis of the lipid core common to phthiocerols and phenolphthiocerols by successive additions of malonyl-CoA or methylmalonyl-CoA extender units. PpsA can accept as substrate the activated forms of either icosanoyl (C20), docosanoyl (C22) or lignoceroyl (C24) groups from FadD26, or a (4-hydroxyphenyl)-C17 or (4-hydroxyphenyl)-C19 fatty acyl from FadD29. PpsA initiates the biosynthesis and extends its substrate using a malonyl-CoA extender unit. The PpsB and PpsC proteins add the second and third malonyl-CoA extender units. PpsD adds an (R)-methylmalonyl unit and PpsE adds a second (R)-methylmalonyl unit. The incorporation of the methylmalonyl units results in formation of two branched methyl groups in the elongated product. This Mycobacterium bovis (strain ATCC BAA-935 / AF2122/97) protein is Phenolphthiocerol/phthiocerol polyketide synthase subunit A (ppsA).